We begin with the raw amino-acid sequence, 210 residues long: Mitochondrial cardiolipin hydrolase (210 aa).

Over 1–6 the chain is Mitochondrial intermembrane; the sequence is MLLWGR. A helical membrane pass occupies residues 7 to 24; it reads WKVVAGLAGLALSLELLL. The Cytoplasmic segment spans residues 25 to 210; the sequence is RYMRRRKPIR…YDFFPEKENK (186 aa). The PLD phosphodiesterase domain occupies 138-165; the sequence is SSGYMHHKFAVVDGTVVLTGSLNWTVQA. Catalysis depends on residues His-143, Lys-145, and Asp-150.

This sequence belongs to the phospholipase D family. MitoPLD/Zucchini subfamily. As to quaternary structure, homodimer.

The protein localises to the mitochondrion outer membrane. It catalyses the reaction a cardiolipin + H2O = a 1,2-diacyl-sn-glycero-3-phospho-(1'-sn-glycerol) + a 1,2-diacyl-sn-glycero-3-phosphate + H(+). Presents phospholipase and nuclease activities, depending on the different physiological conditions. Plays a key role in mitochondrial fusion and fission via its phospholipase activity. In its phospholipase role, it uses the mitochondrial lipid cardiolipin as substrate to generate phosphatidate (PA or 1,2-diacyl-sn-glycero-3-phosphate), a second messenger signaling lipid. Production of PA facilitates Mitofusin-mediated fusion, whereas the cleavage of PA by the Lipin family of phosphatases produces diacylgycerol (DAG) which promotes mitochondrial fission. Regulates mitochondrial shape through facilitating mitochondrial fusion. During spermatogenesis, plays a critical role in PIWI-interacting RNA (piRNA) biogenesis. piRNAs provide essential protection against the activity of mobile genetic elements. piRNA-mediated transposon silencing is thus critical for maintaining genome stability, in particular in germline cells when transposons are mobilized as a consequence of wide-spread genomic demethylation. Has been shown to be a backbone-non-specific, single strand-specific nuclease, cleaving either RNA or DNA substrates with similar affinity. Produces 5' phosphate and 3' hydroxyl termini, suggesting it could directly participate in the processing of primary piRNA transcripts. Has been proposed to act as a cardiolipin hydrolase to generate phosphatidic acid at mitochondrial surface. Although it cannot be excluded that it can act as a phospholipase in some circumstances, this activity could not be confirmed. The chain is Mitochondrial cardiolipin hydrolase (pld6) from Xenopus tropicalis (Western clawed frog).